The chain runs to 419 residues: L-rhamnose isomerase (419 aa).

The Mn(2+) site is built by histidine 262, aspartate 294, and aspartate 296.

It belongs to the rhamnose isomerase family. As to quaternary structure, homotetramer. The cofactor is Mn(2+).

It is found in the cytoplasm. The catalysed reaction is L-rhamnopyranose = L-rhamnulose. It participates in carbohydrate degradation; L-rhamnose degradation; glycerone phosphate from L-rhamnose: step 1/3. Catalyzes the interconversion of L-rhamnose and L-rhamnulose. The protein is L-rhamnose isomerase of Enterobacter sp. (strain 638).